The primary structure comprises 229 residues: Ribonuclease 3 (229 aa).

The RNase III domain maps to 5 to 127 (LSRLERKLGH…LIGAIYLDAG (123 aa)). E40 lines the Mg(2+) pocket. The active site involves D44. The Mg(2+) site is built by D113 and E116. E116 is an active-site residue. Residues 154 to 224 (DPKTRLQEFL…AAAALIALGV (71 aa)) form the DRBM domain.

Belongs to the ribonuclease III family. As to quaternary structure, homodimer. It depends on Mg(2+) as a cofactor.

The protein localises to the cytoplasm. The enzyme catalyses Endonucleolytic cleavage to 5'-phosphomonoester.. Functionally, digests double-stranded RNA. Involved in the processing of primary rRNA transcript to yield the immediate precursors to the large and small rRNAs (23S and 16S). Processes some mRNAs, and tRNAs when they are encoded in the rRNA operon. Processes pre-crRNA and tracrRNA of type II CRISPR loci if present in the organism. The protein is Ribonuclease 3 of Ectopseudomonas mendocina (strain ymp) (Pseudomonas mendocina).